Consider the following 242-residue polypeptide: Biosynthetic peptidoglycan transglycosylase (242 aa).

A helical membrane pass occupies residues 19 to 39 (ILAALAVFWGGGIALFSVVPV).

This sequence belongs to the glycosyltransferase 51 family.

The protein resides in the cell inner membrane. It carries out the reaction [GlcNAc-(1-&gt;4)-Mur2Ac(oyl-L-Ala-gamma-D-Glu-L-Lys-D-Ala-D-Ala)](n)-di-trans,octa-cis-undecaprenyl diphosphate + beta-D-GlcNAc-(1-&gt;4)-Mur2Ac(oyl-L-Ala-gamma-D-Glu-L-Lys-D-Ala-D-Ala)-di-trans,octa-cis-undecaprenyl diphosphate = [GlcNAc-(1-&gt;4)-Mur2Ac(oyl-L-Ala-gamma-D-Glu-L-Lys-D-Ala-D-Ala)](n+1)-di-trans,octa-cis-undecaprenyl diphosphate + di-trans,octa-cis-undecaprenyl diphosphate + H(+). It participates in cell wall biogenesis; peptidoglycan biosynthesis. Peptidoglycan polymerase that catalyzes glycan chain elongation from lipid-linked precursors. This Salmonella heidelberg (strain SL476) protein is Biosynthetic peptidoglycan transglycosylase.